The following is a 116-amino-acid chain: Urease subunit beta (116 aa).

A disordered region spans residues 97–116; it reads IQGPLDAGTAETAPGLPQQP.

This sequence belongs to the urease beta subunit family. As to quaternary structure, heterotrimer of UreA (gamma), UreB (beta) and UreC (alpha) subunits. Three heterotrimers associate to form the active enzyme.

Its subcellular location is the cytoplasm. It catalyses the reaction urea + 2 H2O + H(+) = hydrogencarbonate + 2 NH4(+). Its pathway is nitrogen metabolism; urea degradation; CO(2) and NH(3) from urea (urease route): step 1/1. The chain is Urease subunit beta from Paracidovorax citrulli (strain AAC00-1) (Acidovorax citrulli).